The sequence spans 454 residues: UDP-N-acetylmuramoylalanine--D-glutamate ligase (454 aa).

114 to 120 is an ATP binding site; the sequence is GTNGKTT.

The protein belongs to the MurCDEF family.

Its subcellular location is the cytoplasm. It catalyses the reaction UDP-N-acetyl-alpha-D-muramoyl-L-alanine + D-glutamate + ATP = UDP-N-acetyl-alpha-D-muramoyl-L-alanyl-D-glutamate + ADP + phosphate + H(+). It functions in the pathway cell wall biogenesis; peptidoglycan biosynthesis. Cell wall formation. Catalyzes the addition of glutamate to the nucleotide precursor UDP-N-acetylmuramoyl-L-alanine (UMA). The polypeptide is UDP-N-acetylmuramoylalanine--D-glutamate ligase (Desulfitobacterium hafniense (strain Y51)).